The chain runs to 662 residues: 3',5'-cyclic-AMP phosphodiesterase, isoform F (662 aa).

2 disordered regions span residues 79-108 (VPAS…LSQG) and 207-245 (SAGQ…RLPT). Positions 80–98 (PASNKSRRPNQSSSASRSG) are enriched in polar residues. A PDEase domain is found at 248–577 (VETPRENELG…DYYQSMIPPS (330 aa)). The active-site Proton donor is H324. 324 to 328 (HNSLH) serves as a coordination point for 3',5'-cyclic AMP. Positions 328, 364, 365, and 482 each coordinate a divalent metal cation. The 3',5'-cyclic AMP site is built by D365, D482, and Q533. Residues 599–616 (EESDQENLAELEEGDESG) show a composition bias toward acidic residues. Residues 599–662 (EESDQENLAE…CQNQPQHGGM (64 aa)) form a disordered region. Over residues 617-634 (GESTTTGTTGTTAASALS) the composition is skewed to low complexity. The span at 635–646 (GAGGGGGGGGGM) shows a compositional bias: gly residues. Over residues 652-662 (GCQNQPQHGGM) the composition is skewed to polar residues.

The protein belongs to the cyclic nucleotide phosphodiesterase family. PDE4 subfamily. Monomer. The cofactor is a divalent metal cation.

It catalyses the reaction 3',5'-cyclic AMP + H2O = AMP + H(+). It functions in the pathway purine metabolism; 3',5'-cyclic AMP degradation; AMP from 3',5'-cyclic AMP: step 1/1. Hydrolyzes the second messenger cAMP, which is a key regulator of many important physiological processes. Vital for female fertility. Required for learning/memory. The chain is 3',5'-cyclic-AMP phosphodiesterase, isoform F from Drosophila melanogaster (Fruit fly).